Consider the following 276-residue polypeptide: Probable endonuclease 4 (276 aa).

His65, His105, Glu141, Asp175, His178, His210, Asp223, His225, and Glu255 together coordinate Zn(2+).

Belongs to the AP endonuclease 2 family. It depends on Zn(2+) as a cofactor.

The catalysed reaction is Endonucleolytic cleavage to 5'-phosphooligonucleotide end-products.. In terms of biological role, endonuclease IV plays a role in DNA repair. It cleaves phosphodiester bonds at apurinic or apyrimidinic (AP) sites, generating a 3'-hydroxyl group and a 5'-terminal sugar phosphate. The protein is Probable endonuclease 4 of Symbiobacterium thermophilum (strain DSM 24528 / JCM 14929 / IAM 14863 / T).